The sequence spans 509 residues: 2-succinyl-5-enolpyruvyl-6-hydroxy-3-cyclohexene-1-carboxylate synthase (509 aa).

This sequence belongs to the TPP enzyme family. MenD subfamily. In terms of assembly, homodimer. Mg(2+) serves as cofactor. It depends on Mn(2+) as a cofactor. Thiamine diphosphate is required as a cofactor.

The enzyme catalyses isochorismate + 2-oxoglutarate + H(+) = 5-enolpyruvoyl-6-hydroxy-2-succinyl-cyclohex-3-ene-1-carboxylate + CO2. It functions in the pathway quinol/quinone metabolism; 1,4-dihydroxy-2-naphthoate biosynthesis; 1,4-dihydroxy-2-naphthoate from chorismate: step 2/7. It participates in quinol/quinone metabolism; menaquinone biosynthesis. Catalyzes the thiamine diphosphate-dependent decarboxylation of 2-oxoglutarate and the subsequent addition of the resulting succinic semialdehyde-thiamine pyrophosphate anion to isochorismate to yield 2-succinyl-5-enolpyruvyl-6-hydroxy-3-cyclohexene-1-carboxylate (SEPHCHC). This chain is 2-succinyl-5-enolpyruvyl-6-hydroxy-3-cyclohexene-1-carboxylate synthase, found in Corynebacterium diphtheriae (strain ATCC 700971 / NCTC 13129 / Biotype gravis).